A 412-amino-acid chain; its full sequence is Alanyl-tRNA editing protein Aarsd1-A (412 aa).

Positions 108, 112, 208, and 212 each coordinate Zn(2+).

This sequence belongs to the class-II aminoacyl-tRNA synthetase family. Alax-L subfamily. The cofactor is Zn(2+).

It is found in the cytoplasm. Functions in trans to edit the amino acid moiety from incorrectly charged tRNA(Ala). This chain is Alanyl-tRNA editing protein Aarsd1-A (aarsd1-a), found in Xenopus laevis (African clawed frog).